Consider the following 709-residue polypeptide: Elongation factor G (709 aa).

Residues 8–290 (NRYRNIGISA…AVIQYMPAPQ (283 aa)) enclose the tr-type G domain. GTP contacts are provided by residues 17–24 (AHIDAGKT), 88–92 (DTPGH), and 142–145 (NKMD).

This sequence belongs to the TRAFAC class translation factor GTPase superfamily. Classic translation factor GTPase family. EF-G/EF-2 subfamily.

It is found in the cytoplasm. Catalyzes the GTP-dependent ribosomal translocation step during translation elongation. During this step, the ribosome changes from the pre-translocational (PRE) to the post-translocational (POST) state as the newly formed A-site-bound peptidyl-tRNA and P-site-bound deacylated tRNA move to the P and E sites, respectively. Catalyzes the coordinated movement of the two tRNA molecules, the mRNA and conformational changes in the ribosome. This chain is Elongation factor G, found in Psychrobacter sp. (strain PRwf-1).